Reading from the N-terminus, the 123-residue chain is UPF0738 protein BCE33L1094 (123 aa).

This sequence belongs to the UPF0738 family.

This Bacillus cereus (strain ZK / E33L) protein is UPF0738 protein BCE33L1094.